The sequence spans 399 residues: Bombesin receptor subtype-3 (399 aa).

Over M1 to S41 the chain is Extracellular. N10, N18, and N29 each carry an N-linked (GlcNAc...) asparagine glycan. The chain crosses the membrane as a helical span at residues P42–L63. Over G64 to P82 the chain is Cytoplasmic. A helical transmembrane segment spans residues N83–V103. The Extracellular portion of the chain corresponds to D104 to K121. Residues C120 and C203 are joined by a disulfide bond. A helical membrane pass occupies residues V122 to A143. The Cytoplasmic segment spans residues D144 to K163. Residues T164–I184 traverse the membrane as a helical segment. At F185 to L220 the chain is on the extracellular side. The chain crosses the membrane as a helical span at residues C221–A241. Residues R242–T272 lie on the Cytoplasmic side of the membrane. A helical membrane pass occupies residues V273–Y293. The Extracellular portion of the chain corresponds to H294–I313. The chain crosses the membrane as a helical span at residues F314 to L333. Over S334–V399 the chain is Cytoplasmic. The S-palmitoyl cysteine moiety is linked to residue C347.

This sequence belongs to the G-protein coupled receptor 1 family. In terms of assembly, interacts with C6orf89.

It localises to the cell membrane. Role in sperm cell division, maturation, or function. This receptor mediates its action by association with G proteins that activate a phosphatidylinositol-calcium second messenger system. The sequence is that of Bombesin receptor subtype-3 (Brs3) from Rattus norvegicus (Rat).